We begin with the raw amino-acid sequence, 274 residues long: NADPH-dependent 7-cyano-7-deazaguanine reductase (274 aa).

80-82 is a binding site for substrate; the sequence is VES. 82–83 contacts NADPH; that stretch reads SK. Catalysis depends on Cys181, which acts as the Thioimide intermediate. Asp188 serves as the catalytic Proton donor. 220-221 is a binding site for substrate; it reads HE. 249–250 serves as a coordination point for NADPH; that stretch reads RG.

Belongs to the GTP cyclohydrolase I family. QueF type 2 subfamily. As to quaternary structure, homodimer.

It localises to the cytoplasm. The enzyme catalyses 7-aminomethyl-7-carbaguanine + 2 NADP(+) = 7-cyano-7-deazaguanine + 2 NADPH + 3 H(+). It functions in the pathway tRNA modification; tRNA-queuosine biosynthesis. Functionally, catalyzes the NADPH-dependent reduction of 7-cyano-7-deazaguanine (preQ0) to 7-aminomethyl-7-deazaguanine (preQ1). The protein is NADPH-dependent 7-cyano-7-deazaguanine reductase of Burkholderia thailandensis (strain ATCC 700388 / DSM 13276 / CCUG 48851 / CIP 106301 / E264).